The primary structure comprises 134 residues: Small ribosomal subunit protein uS8c (134 aa).

Belongs to the universal ribosomal protein uS8 family. Part of the 30S ribosomal subunit.

It is found in the plastid. It localises to the chloroplast. Functionally, one of the primary rRNA binding proteins, it binds directly to 16S rRNA central domain where it helps coordinate assembly of the platform of the 30S subunit. This Arabidopsis thaliana (Mouse-ear cress) protein is Small ribosomal subunit protein uS8c (rps8).